A 246-amino-acid polypeptide reads, in one-letter code: MNANLPISKKRKFVSDGIFKAELNEFLTRELAEDGYSGVEVRVTPSRTEIIIMATKTQQVLGEKGRRIRELTAMVQKRFNFETGRIELYAEKVAARGLCAIAQAESLRYKLTGGLAVRRACYGVLRYIMESGAKGCEVVVSGKLRGQRAKSMKFVDGLMIHSGDPCNDYVETATRHVLLRQGVLGIKVKVMLPYDPKNKIGPKKPLPDNVSVVEPKEEKIYETPETEYKIPPPSKPLDDLSEAKVL.

A KH type-2 domain is found at L23–A94. Residues G201–L246 form a disordered region. 2 stretches are compositionally biased toward basic and acidic residues: residues E214–Y228 and P236–L246. T223 and T226 each carry phosphothreonine. S241 bears the Phosphoserine mark.

The protein belongs to the universal ribosomal protein uS3 family. In terms of assembly, interacts with LTV1; the interaction is RNA-independent.

It is found in the cytoplasm. It localises to the nucleus. Functionally, has DNA repair activity directed towards the mutagenic lesions 8-oxoguanine and abasic sites in DNA. It can cleave DNA containing 8-oxoguanine residues efficiently. Also acts as an ap lyase, cleaving phosphodiester bonds via a beta,delta elimination reaction. This is Small ribosomal subunit protein uS3 (RpS3) from Drosophila melanogaster (Fruit fly).